Here is a 147-residue protein sequence, read N- to C-terminus: Large ribosomal subunit protein uL15 (147 aa).

The interval 1-65 (MQLHELKPAP…PLQRRLPKRG (65 aa)) is disordered. 2 stretches are compositionally biased toward gly residues: residues 21–31 (QGIGSGLGKTA) and 42–52 (SGGGVRPGFEG).

It belongs to the universal ribosomal protein uL15 family. As to quaternary structure, part of the 50S ribosomal subunit.

Its function is as follows. Binds to the 23S rRNA. The protein is Large ribosomal subunit protein uL15 of Heliobacterium modesticaldum (strain ATCC 51547 / Ice1).